The primary structure comprises 382 residues: Diphosphomevalonate decarboxylase ERG19 (382 aa).

Residues 22–25 (YWGK), Arg78, 157–162 (SGSACR), and Thr213 each bind (R)-5-diphosphomevalonate.

It belongs to the diphosphomevalonate decarboxylase family. As to quaternary structure, homodimer.

The catalysed reaction is (R)-5-diphosphomevalonate + ATP = isopentenyl diphosphate + ADP + phosphate + CO2. Its pathway is isoprenoid biosynthesis; isopentenyl diphosphate biosynthesis via mevalonate pathway; isopentenyl diphosphate from (R)-mevalonate: step 3/3. Its function is as follows. Diphosphomevalonate decarboxylase; part of the second module of ergosterol biosynthesis pathway that includes the middle steps of the pathway. MVD1 converts diphosphomevalonate into isopentenyl diphosphate. The second module is carried out in the vacuole and involves the formation of farnesyl diphosphate, which is also an important intermediate in the biosynthesis of ubiquinone, dolichol, heme and prenylated proteins. Activity by the mevalonate kinase ERG12 (FG05912) first converts mevalonate into 5-phosphomevalonate. 5-phosphomevalonate is then further converted to 5-diphosphomevalonate by the phosphomevalonate kinase ERG8 (FG09764). The diphosphomevalonate decarboxylase ERG19 (FG10424) then produces isopentenyl diphosphate. The isopentenyl-diphosphate delta-isomerase IDI1 (FG09722) then catalyzes the 1,3-allylic rearrangement of the homoallylic substrate isopentenyl (IPP) to its highly electrophilic allylic isomer, dimethylallyl diphosphate (DMAPP). Finally the farnesyl diphosphate synthase ERG20 (FG06784) catalyzes the sequential condensation of isopentenyl pyrophosphate with dimethylallyl pyrophosphate, and then with the resultant geranylpyrophosphate to the ultimate product farnesyl pyrophosphate. This Gibberella zeae (strain ATCC MYA-4620 / CBS 123657 / FGSC 9075 / NRRL 31084 / PH-1) (Wheat head blight fungus) protein is Diphosphomevalonate decarboxylase ERG19.